The chain runs to 295 residues: Ribosomal RNA small subunit methyltransferase A (295 aa).

6 residues coordinate S-adenosyl-L-methionine: asparagine 29, leucine 31, glycine 56, glutamate 77, aspartate 102, and asparagine 128.

It belongs to the class I-like SAM-binding methyltransferase superfamily. rRNA adenine N(6)-methyltransferase family. RsmA subfamily.

It is found in the cytoplasm. It carries out the reaction adenosine(1518)/adenosine(1519) in 16S rRNA + 4 S-adenosyl-L-methionine = N(6)-dimethyladenosine(1518)/N(6)-dimethyladenosine(1519) in 16S rRNA + 4 S-adenosyl-L-homocysteine + 4 H(+). Functionally, specifically dimethylates two adjacent adenosines (A1518 and A1519) in the loop of a conserved hairpin near the 3'-end of 16S rRNA in the 30S particle. May play a critical role in biogenesis of 30S subunits. This is Ribosomal RNA small subunit methyltransferase A from Listeria welshimeri serovar 6b (strain ATCC 35897 / DSM 20650 / CCUG 15529 / CIP 8149 / NCTC 11857 / SLCC 5334 / V8).